Consider the following 98-residue polypeptide: UPF0235 protein MJ0618 (98 aa).

The protein belongs to the UPF0235 family.

This Methanocaldococcus jannaschii (strain ATCC 43067 / DSM 2661 / JAL-1 / JCM 10045 / NBRC 100440) (Methanococcus jannaschii) protein is UPF0235 protein MJ0618.